Consider the following 215-residue polypeptide: 3-isopropylmalate dehydratase small subunit (215 aa).

The protein belongs to the LeuD family. LeuD type 1 subfamily. Heterodimer of LeuC and LeuD.

It catalyses the reaction (2R,3S)-3-isopropylmalate = (2S)-2-isopropylmalate. It participates in amino-acid biosynthesis; L-leucine biosynthesis; L-leucine from 3-methyl-2-oxobutanoate: step 2/4. In terms of biological role, catalyzes the isomerization between 2-isopropylmalate and 3-isopropylmalate, via the formation of 2-isopropylmaleate. The protein is 3-isopropylmalate dehydratase small subunit of Xanthomonas oryzae pv. oryzae (strain MAFF 311018).